The primary structure comprises 245 residues: MSGHSKWATIKHAKGAADAKRGQLFTKFIKEISVAARMAGGDPQANPRLRTAILKARAANMPKDNIERAIKKGTGELSGSSYEELVYEGYAPGGVAVLVEVLTDNKNRAAANVRNLFSRNGGNLGSAGSVSYMFNRKGVIEYDSEQVDEEALMELALEAGAEDIQNAGGVLTVTTVPGTFETVLESLQAKGWESLSAGISMVPDTYLALDEETARKVLKMIDRLEEEEDVQAVYSNADIPSELVL.

The protein belongs to the TACO1 family.

It is found in the cytoplasm. This is Probable transcriptional regulatory protein TP_0474 from Treponema pallidum (strain Nichols).